A 532-amino-acid chain; its full sequence is NADH-quinone oxidoreductase subunit N 2 (532 aa).

Transmembrane regions (helical) follow at residues 37-57, 63-83, 107-127, 133-153, 158-178, 192-212, 241-261, 276-296, 302-322, 336-356, 367-387, 411-431, 444-464, and 504-524; these read VAPPTLTALAALAVLVADLFL, RLLGYAALTALAAALALLIPL, FTLVIQALVLGGALLTVLLSL, LPAGEYWFLLLASAAGAALLP, LATLVVALEVASLPAFALVGI, FFLSSVVATAVMLLGVSFVYA, VALTLVGFAFKTAAAPFHFWV, LSVVGKAVGFSGLILVTVVAF, VWGPALAVLAALTMTAGNVAA, LLAWSSVAQAGYLLVPIAAAA, VAYALMYAVVNLGAFAVAAVV, LALGFFLLCLAGLPPGIIGLF, GLGWLAVVMAVNVVIALYYYL, and TAIVLTATAGILLSGVPQTVL.

This sequence belongs to the complex I subunit 2 family. As to quaternary structure, NDH-1 is composed of 14 different subunits. Subunits NuoA, H, J, K, L, M, N constitute the membrane sector of the complex.

It is found in the cell membrane. The catalysed reaction is a quinone + NADH + 5 H(+)(in) = a quinol + NAD(+) + 4 H(+)(out). Its function is as follows. NDH-1 shuttles electrons from NADH, via FMN and iron-sulfur (Fe-S) centers, to quinones in the respiratory chain. The immediate electron acceptor for the enzyme in this species is believed to be a menaquinone. Couples the redox reaction to proton translocation (for every two electrons transferred, four hydrogen ions are translocated across the cytoplasmic membrane), and thus conserves the redox energy in a proton gradient. This is NADH-quinone oxidoreductase subunit N 2 from Streptomyces griseus subsp. griseus (strain JCM 4626 / CBS 651.72 / NBRC 13350 / KCC S-0626 / ISP 5235).